Consider the following 317-residue polypeptide: Beta-ketoacyl-[acyl-carrier-protein] synthase III (317 aa).

Catalysis depends on residues Cys-112 and His-244. The interval 245-249 is ACP-binding; it reads QANLR. Asn-274 is an active-site residue.

It belongs to the thiolase-like superfamily. FabH family. In terms of assembly, homodimer.

The protein localises to the cytoplasm. The catalysed reaction is malonyl-[ACP] + acetyl-CoA + H(+) = 3-oxobutanoyl-[ACP] + CO2 + CoA. It functions in the pathway lipid metabolism; fatty acid biosynthesis. Catalyzes the condensation reaction of fatty acid synthesis by the addition to an acyl acceptor of two carbons from malonyl-ACP. Catalyzes the first condensation reaction which initiates fatty acid synthesis and may therefore play a role in governing the total rate of fatty acid production. Possesses both acetoacetyl-ACP synthase and acetyl transacylase activities. Its substrate specificity determines the biosynthesis of branched-chain and/or straight-chain of fatty acids. The protein is Beta-ketoacyl-[acyl-carrier-protein] synthase III of Shigella dysenteriae serotype 1 (strain Sd197).